A 482-amino-acid chain; its full sequence is tRNA sulfurtransferase (482 aa).

The THUMP domain maps to 61–165 (AAIVAELTRI…DERLILVTAR (105 aa)). ATP contacts are provided by residues 183-184 (LI), lysine 265, glycine 287, and glutamine 296. Residues cysteine 344 and cysteine 456 are joined by a disulfide bond. Residues 404–482 (FSHNDVILDI…GFKNVKVYRP (79 aa)) form the Rhodanese domain. The active-site Cysteine persulfide intermediate is cysteine 456.

It belongs to the ThiI family.

It localises to the cytoplasm. The enzyme catalyses [ThiI sulfur-carrier protein]-S-sulfanyl-L-cysteine + a uridine in tRNA + 2 reduced [2Fe-2S]-[ferredoxin] + ATP + H(+) = [ThiI sulfur-carrier protein]-L-cysteine + a 4-thiouridine in tRNA + 2 oxidized [2Fe-2S]-[ferredoxin] + AMP + diphosphate. It carries out the reaction [ThiS sulfur-carrier protein]-C-terminal Gly-Gly-AMP + S-sulfanyl-L-cysteinyl-[cysteine desulfurase] + AH2 = [ThiS sulfur-carrier protein]-C-terminal-Gly-aminoethanethioate + L-cysteinyl-[cysteine desulfurase] + A + AMP + 2 H(+). It functions in the pathway cofactor biosynthesis; thiamine diphosphate biosynthesis. Functionally, catalyzes the ATP-dependent transfer of a sulfur to tRNA to produce 4-thiouridine in position 8 of tRNAs, which functions as a near-UV photosensor. Also catalyzes the transfer of sulfur to the sulfur carrier protein ThiS, forming ThiS-thiocarboxylate. This is a step in the synthesis of thiazole, in the thiamine biosynthesis pathway. The sulfur is donated as persulfide by IscS. This chain is tRNA sulfurtransferase, found in Erwinia tasmaniensis (strain DSM 17950 / CFBP 7177 / CIP 109463 / NCPPB 4357 / Et1/99).